We begin with the raw amino-acid sequence, 130 residues long: Putative ankyrin repeat protein R886 (130 aa).

ANK repeat units follow at residues 21-50 (NYDRTIINSSEYGNFEIVKYLIDNGADITA), 54-83 (YGFTPLDLSSKNGHYEIVKLLVECRASIIK), and 85-113 (DNLTLILASENGHIKIVKLLVENGADIRY).

The polypeptide is Putative ankyrin repeat protein R886 (Acanthamoeba polyphaga (Amoeba)).